The primary structure comprises 239 residues: Purine nucleoside phosphorylase DeoD-type (239 aa).

His5 provides a ligand contact to a purine D-ribonucleoside. Phosphate is bound by residues Gly21, Arg25, Arg44, and 88–91; that span reads RVGS. Residues 180 to 182 and 204 to 205 contribute to the a purine D-ribonucleoside site; these read EME and SD. Asp205 functions as the Proton donor in the catalytic mechanism.

The protein belongs to the PNP/UDP phosphorylase family. In terms of assembly, homohexamer; trimer of homodimers.

It carries out the reaction a purine D-ribonucleoside + phosphate = a purine nucleobase + alpha-D-ribose 1-phosphate. The enzyme catalyses a purine 2'-deoxy-D-ribonucleoside + phosphate = a purine nucleobase + 2-deoxy-alpha-D-ribose 1-phosphate. Catalyzes the reversible phosphorolytic breakdown of the N-glycosidic bond in the beta-(deoxy)ribonucleoside molecules, with the formation of the corresponding free purine bases and pentose-1-phosphate. This Salmonella gallinarum (strain 287/91 / NCTC 13346) protein is Purine nucleoside phosphorylase DeoD-type.